The primary structure comprises 204 residues: Small ribosomal subunit protein uS4 (204 aa).

A disordered region spans residues 25–47; that stretch reads SPVNKREYGPGQHGQRRKKPSDY. The S4 RNA-binding domain maps to 93-156; that stretch reads RRLDAVVYRM…KQFAFVMEAA (64 aa).

It belongs to the universal ribosomal protein uS4 family. Part of the 30S ribosomal subunit. Contacts protein S5. The interaction surface between S4 and S5 is involved in control of translational fidelity.

One of the primary rRNA binding proteins, it binds directly to 16S rRNA where it nucleates assembly of the body of the 30S subunit. Functionally, with S5 and S12 plays an important role in translational accuracy. The chain is Small ribosomal subunit protein uS4 from Rhodospirillum centenum (strain ATCC 51521 / SW).